Consider the following 217-residue polypeptide: tRNA (guanine-N(7)-)-methyltransferase (217 aa).

Residues glutamate 44, glutamate 69, asparagine 96, and aspartate 118 each coordinate S-adenosyl-L-methionine. Aspartate 118 is an active-site residue. Residue lysine 122 coordinates substrate. Positions 124 to 129 (RHEKRR) are interaction with RNA. Residues aspartate 154 and 191–194 (TEYE) contribute to the substrate site.

It belongs to the class I-like SAM-binding methyltransferase superfamily. TrmB family.

It carries out the reaction guanosine(46) in tRNA + S-adenosyl-L-methionine = N(7)-methylguanosine(46) in tRNA + S-adenosyl-L-homocysteine. It functions in the pathway tRNA modification; N(7)-methylguanine-tRNA biosynthesis. In terms of biological role, catalyzes the formation of N(7)-methylguanine at position 46 (m7G46) in tRNA. This is tRNA (guanine-N(7)-)-methyltransferase from Geobacillus kaustophilus (strain HTA426).